Reading from the N-terminus, the 37-residue chain is Large ribosomal subunit protein bL36c (37 aa).

This sequence belongs to the bacterial ribosomal protein bL36 family.

The protein localises to the plastid. It localises to the chloroplast. This chain is Large ribosomal subunit protein bL36c, found in Tupiella akineta (Green alga).